The chain runs to 334 residues: Ribosomal RNA small subunit methyltransferase H (334 aa).

S-adenosyl-L-methionine-binding positions include 53-55 (GGH), D72, F99, D122, and H129.

It belongs to the methyltransferase superfamily. RsmH family.

The protein resides in the cytoplasm. The enzyme catalyses cytidine(1402) in 16S rRNA + S-adenosyl-L-methionine = N(4)-methylcytidine(1402) in 16S rRNA + S-adenosyl-L-homocysteine + H(+). Its function is as follows. Specifically methylates the N4 position of cytidine in position 1402 (C1402) of 16S rRNA. The protein is Ribosomal RNA small subunit methyltransferase H of Leptospira interrogans serogroup Icterohaemorrhagiae serovar Lai (strain 56601).